We begin with the raw amino-acid sequence, 411 residues long: Putative competence-damage inducible protein (411 aa).

This sequence belongs to the CinA family.

In Caldicellulosiruptor bescii (strain ATCC BAA-1888 / DSM 6725 / KCTC 15123 / Z-1320) (Anaerocellum thermophilum), this protein is Putative competence-damage inducible protein.